Here is a 194-residue protein sequence, read N- to C-terminus: Mitochondrial import inner membrane translocase subunit Tim22 (194 aa).

2 disulfide bridges follow: C69-C141 and C160-C179. The next 3 helical transmembrane spans lie at 74–94, 123–143, and 170–190; these read ALAC…TAGI, MSYA…ECLI, and AGLK…AAID.

Belongs to the Tim17/Tim22/Tim23 family. As to quaternary structure, component of the TIM22 complex, whose core is composed of TIMM22, associated with peripheral protein FXC1/TIMM10B and the 70 kDa heterohexamer. In most cases, the 70 kDa complex is composed of TIMM9 and TIMM10 (TIMM10A or TIMM10B). A small fraction of the 70 kDa complex is composed of TIMM8 (TIMM8A/DDP1 or TIMM8B/DDP2) and TIMM13. The TIM22 complex also contains AGK and TIMM29. Interacts directly with TIMM9, TIMM10A and FXC1/TIMM10B. Interacts (when oxidized) with TIMM29; interaction is direct. Disulfide bonds promote efficient assembly of the TIM22 complex.

The protein localises to the mitochondrion inner membrane. In terms of biological role, essential core component of the TIM22 complex, a complex that mediates the import and insertion of multi-pass transmembrane proteins into the mitochondrial inner membrane. In the TIM22 complex, it constitutes the voltage-activated and signal-gated channel. Forms a twin-pore translocase that uses the membrane potential as external driving force in 2 voltage-dependent steps. This chain is Mitochondrial import inner membrane translocase subunit Tim22 (TIMM22), found in Homo sapiens (Human).